An 82-amino-acid polypeptide reads, in one-letter code: Small ribosomal subunit protein bS16 (82 aa).

It belongs to the bacterial ribosomal protein bS16 family.

This is Small ribosomal subunit protein bS16 from Aeromonas salmonicida (strain A449).